The primary structure comprises 115 residues: U3-lycotoxin-Ls1c (115 aa).

The N-terminal stretch at 1 to 20 (MKFVLLFGVLLVTLFSYSSA) is a signal peptide. A propeptide spanning residues 21–44 (EMLDDFDQADEDELLSLIEKEEAR) is cleaved from the precursor. 4 cysteine pairs are disulfide-bonded: Cys48–Cys63, Cys55–Cys72, Cys62–Cys87, and Cys74–Cys85.

It belongs to the neurotoxin 19 (CSTX) family. 01 subfamily. In terms of tissue distribution, expressed by the venom gland.

Its subcellular location is the secreted. This chain is U3-lycotoxin-Ls1c, found in Lycosa singoriensis (Wolf spider).